A 371-amino-acid polypeptide reads, in one-letter code: tRNA-specific 2-thiouridylase MnmA (371 aa).

ATP contacts are provided by residues Gly13–Ser20 and Met39. Residues Asn99 to Asp101 are interaction with target base in tRNA. The Nucleophile role is filled by Cys104. Cys104 and Cys200 form a disulfide bridge. Gly128 lines the ATP pocket. The interaction with tRNA stretch occupies residues Lys150–Gln152. Cys200 serves as the catalytic Cysteine persulfide intermediate. Residues Arg309–Tyr310 are interaction with tRNA.

Belongs to the MnmA/TRMU family.

The protein resides in the cytoplasm. The catalysed reaction is S-sulfanyl-L-cysteinyl-[protein] + uridine(34) in tRNA + AH2 + ATP = 2-thiouridine(34) in tRNA + L-cysteinyl-[protein] + A + AMP + diphosphate + H(+). Its function is as follows. Catalyzes the 2-thiolation of uridine at the wobble position (U34) of tRNA, leading to the formation of s(2)U34. This chain is tRNA-specific 2-thiouridylase MnmA, found in Bacillus velezensis (strain DSM 23117 / BGSC 10A6 / LMG 26770 / FZB42) (Bacillus amyloliquefaciens subsp. plantarum).